The following is a 312-amino-acid chain: Olfactory receptor 51B5 (312 aa).

Over 1–23 (MSSSGSSHPFLLTGFPGLEEAHH) the chain is Extracellular. The chain crosses the membrane as a helical span at residues 24-44 (WISVFFLFMYISILFGNGTLL). Residues 45-52 (LLIKEDHN) lie on the Cytoplasmic side of the membrane. Residues 53–73 (LHEPMYFFLAMLAATDLGLAL) form a helical membrane-spanning segment. Residues 74–97 (TTMPTVLGVLWLDHREIGSAACFS) are Extracellular-facing. The cysteines at positions 95 and 187 are disulfide-linked. The helical transmembrane segment at 98–118 (QAYFIHSLSFLESGILLAMAY) threads the bilayer. Over 119–137 (DRFIAICNPLRYTSVLTNT) the chain is Cytoplasmic. The helical transmembrane segment at 138-158 (RVVKIGLGVLMRGFVSVVPPI) threads the bilayer. The Extracellular portion of the chain corresponds to 159–194 (RPLYFFLYCHSHVLSHAFCLHQDVIKLACADTTFNR). The chain crosses the membrane as a helical span at residues 195-215 (LYPAVLVVFIFVLDYLIIFIS). Residues 216–235 (YVLILKTVLSIASREERAKA) are Cytoplasmic-facing. Residues 236–256 (LITCVSHICCVLVFYVTVIGL) form a helical membrane-spanning segment. Residues 257-271 (SLIHRFGKQVPHIVH) are Extracellular-facing. The helical transmembrane segment at 272–292 (LIMSYAYFLFPPLMNPITYSV) threads the bilayer. Topologically, residues 293–312 (KTKQIQNAILHLFTTHRIGT) are cytoplasmic.

It belongs to the G-protein coupled receptor 1 family.

It localises to the cell membrane. Functionally, odorant receptor. The sequence is that of Olfactory receptor 51B5 (OR51B5) from Homo sapiens (Human).